The following is a 322-amino-acid chain: Acetyl-coenzyme A carboxylase carboxyl transferase subunit alpha (322 aa).

Residues 43–297 form the CoA carboxyltransferase C-terminal domain; it reads ALKSKSNALT…KEVLTQQLNK (255 aa).

Belongs to the AccA family. As to quaternary structure, acetyl-CoA carboxylase is a heterohexamer composed of biotin carboxyl carrier protein (AccB), biotin carboxylase (AccC) and two subunits each of ACCase subunit alpha (AccA) and ACCase subunit beta (AccD).

The protein resides in the cytoplasm. The catalysed reaction is N(6)-carboxybiotinyl-L-lysyl-[protein] + acetyl-CoA = N(6)-biotinyl-L-lysyl-[protein] + malonyl-CoA. It functions in the pathway lipid metabolism; malonyl-CoA biosynthesis; malonyl-CoA from acetyl-CoA: step 1/1. In terms of biological role, component of the acetyl coenzyme A carboxylase (ACC) complex. First, biotin carboxylase catalyzes the carboxylation of biotin on its carrier protein (BCCP) and then the CO(2) group is transferred by the carboxyltransferase to acetyl-CoA to form malonyl-CoA. The chain is Acetyl-coenzyme A carboxylase carboxyl transferase subunit alpha from Vesicomyosocius okutanii subsp. Calyptogena okutanii (strain HA).